We begin with the raw amino-acid sequence, 476 residues long: UDP-N-acetylmuramate--L-alanine ligase (476 aa).

Glycine 107–threonine 113 serves as a coordination point for ATP.

The protein belongs to the MurCDEF family.

It is found in the cytoplasm. The enzyme catalyses UDP-N-acetyl-alpha-D-muramate + L-alanine + ATP = UDP-N-acetyl-alpha-D-muramoyl-L-alanine + ADP + phosphate + H(+). The protein operates within cell wall biogenesis; peptidoglycan biosynthesis. Cell wall formation. This Roseiflexus castenholzii (strain DSM 13941 / HLO8) protein is UDP-N-acetylmuramate--L-alanine ligase.